Here is a 467-residue protein sequence, read N- to C-terminus: Light-independent protochlorophyllide reductase subunit N (467 aa).

[4Fe-4S] cluster contacts are provided by C24, C49, and C109.

Belongs to the BchN/ChlN family. Protochlorophyllide reductase is composed of three subunits; ChlL, ChlN and ChlB. Forms a heterotetramer of two ChlB and two ChlN subunits. [4Fe-4S] cluster serves as cofactor.

It carries out the reaction chlorophyllide a + oxidized 2[4Fe-4S]-[ferredoxin] + 2 ADP + 2 phosphate = protochlorophyllide a + reduced 2[4Fe-4S]-[ferredoxin] + 2 ATP + 2 H2O. Its pathway is porphyrin-containing compound metabolism; chlorophyll biosynthesis (light-independent). Functionally, component of the dark-operative protochlorophyllide reductase (DPOR) that uses Mg-ATP and reduced ferredoxin to reduce ring D of protochlorophyllide (Pchlide) to form chlorophyllide a (Chlide). This reaction is light-independent. The NB-protein (ChlN-ChlB) is the catalytic component of the complex. This chain is Light-independent protochlorophyllide reductase subunit N, found in Leptolyngbya boryana (Plectonema boryanum).